The chain runs to 512 residues: ATP synthase subunit alpha (512 aa).

169–176 lines the ATP pocket; it reads GDRQTGKT.

This sequence belongs to the ATPase alpha/beta chains family. In terms of assembly, F-type ATPases have 2 components, CF(1) - the catalytic core - and CF(0) - the membrane proton channel. CF(1) has five subunits: alpha(3), beta(3), gamma(1), delta(1), epsilon(1). CF(0) has three main subunits: a(1), b(2) and c(9-12). The alpha and beta chains form an alternating ring which encloses part of the gamma chain. CF(1) is attached to CF(0) by a central stalk formed by the gamma and epsilon chains, while a peripheral stalk is formed by the delta and b chains.

The protein resides in the cell inner membrane. It catalyses the reaction ATP + H2O + 4 H(+)(in) = ADP + phosphate + 5 H(+)(out). Produces ATP from ADP in the presence of a proton gradient across the membrane. The alpha chain is a regulatory subunit. This Ruegeria pomeroyi (strain ATCC 700808 / DSM 15171 / DSS-3) (Silicibacter pomeroyi) protein is ATP synthase subunit alpha.